Here is a 632-residue protein sequence, read N- to C-terminus: Probable potassium transport system protein Kup 2 (632 aa).

12 helical membrane passes run 19–39, 58–78, 110–130, 147–167, 178–198, 216–236, 257–277, 290–310, 347–367, 377–397, 404–424, and 429–449; these read FWGLTLGSIGVVFGDIGTSPL, MIVLGVLSLILWSLFIVVTAK, MFLMSLGVIGASMFIGDSMIT, PALEHYVVPLTVFILVVLFAV, AFGPVMVLWFASLAVMGIVHI, FLLSHGTIGLVTLGAVFLAVT, WLFFVLPSLLINYFGQGALVL, MVPELLLLPLVVLATAATVIA, IYLPRVNRLLLIGVMLLVLLF, YGIAVSTTMVADGIMGFVVIW, AAVAAAIIVPFVIVDLSFFSA, and LFEGAWVPLLFGAAMAVTIWT.

It belongs to the HAK/KUP transporter (TC 2.A.72) family.

Its subcellular location is the cell inner membrane. It catalyses the reaction K(+)(in) + H(+)(in) = K(+)(out) + H(+)(out). Transport of potassium into the cell. Likely operates as a K(+):H(+) symporter. The chain is Probable potassium transport system protein Kup 2 from Bradyrhizobium sp. (strain BTAi1 / ATCC BAA-1182).